A 176-amino-acid polypeptide reads, in one-letter code: Large ribosomal subunit protein uL10 (176 aa).

Belongs to the universal ribosomal protein uL10 family. In terms of assembly, part of the ribosomal stalk of the 50S ribosomal subunit. The N-terminus interacts with L11 and the large rRNA to form the base of the stalk. The C-terminus forms an elongated spine to which L12 dimers bind in a sequential fashion forming a multimeric L10(L12)X complex.

In terms of biological role, forms part of the ribosomal stalk, playing a central role in the interaction of the ribosome with GTP-bound translation factors. The protein is Large ribosomal subunit protein uL10 of Coprothermobacter proteolyticus (strain ATCC 35245 / DSM 5265 / OCM 4 / BT).